The primary structure comprises 219 residues: Flagellin A (219 aa).

The propeptide occupies 1–12 (MKVKEFMNNKKG). Asn-38 and Asn-175 each carry an N-linked (GlcNAc...) asparagine glycan.

It belongs to the archaeal flagellin family. Post-translationally, N-linked glycans consist of the 779 Da trisaccharide beta-ManNAc(Thr)-(1-4)-beta-GlcNAc3NAcA-(1-3)-beta-GlcNAc.

The protein resides in the archaeal flagellum. Flagellin is the subunit protein which polymerizes to form the filaments of archaeal flagella. The polypeptide is Flagellin A (flaA) (Methanococcus voltae).